The primary structure comprises 74 residues: Small ribosomal subunit protein eS17 (74 aa).

It belongs to the eukaryotic ribosomal protein eS17 family.

The sequence is that of Small ribosomal subunit protein eS17 from Ignicoccus hospitalis (strain KIN4/I / DSM 18386 / JCM 14125).